Here is a 108-residue protein sequence, read N- to C-terminus: MTKNTRFSPEVRQRAVRMVLESQGEYDSQWATICSIAPKIGCTPETLRVRVRQHERDTGGGDGGLTTAERQRLKELERENRELRRSNDILRQASAYFAKAEFDRLWKK.

The protein belongs to the transposase 8 family.

This chain is Insertion element IS629 uncharacterized 12 kDa protein S4062, found in Shigella flexneri.